The chain runs to 301 residues: GTPase IMAP family member 3 (301 aa).

At 1 to 279 (METLQNVVTG…GKKLEVLHSD (279 aa)) the chain is on the cytoplasmic side. In terms of domain architecture, AIG1-type G spans 20-223 (SRPLRILLVG…HSNDLFLHAE (204 aa)). Residues 29–37 (GKSGCGKSA), Ser50, 147–149 (RKE), and Asn184 contribute to the GTP site. Residues 263-301 (VLKVLPIGKKLEVLHSDFCWYLVLAILIFFVFFFLLFYV) are required for targeting to the endoplasmic reticulum. Residues 280-300 (FCWYLVLAILIFFVFFFLLFY) traverse the membrane as a helical; Anchor for type IV membrane protein segment. Val301 is a topological domain (lumenal).

The protein belongs to the TRAFAC class TrmE-Era-EngA-EngB-Septin-like GTPase superfamily. AIG1/Toc34/Toc159-like paraseptin GTPase family. IAN subfamily. In terms of assembly, interacts with BAD, BAK1, BAX, BCL2, BCL2L1/Bcl-xL and BCL2L11/BimEL. The interaction with BAX is increased, when cells initiate apoptosis upon IL2 withdrawal. Expressed in thymus (in thymocytes), spleen (in splenocytes), lymph node and, at lower levels, in lung. Highly expressed in T lymphocytes.

The protein localises to the endoplasmic reticulum membrane. During thymocyte development, may support the positive selection of CD4 and CD8 T cells. May play a role in mitochondrial DNA segregation in hematopoietic tissues. Binds GTP. The polypeptide is GTPase IMAP family member 3 (Gimap3) (Mus musculus (Mouse)).